We begin with the raw amino-acid sequence, 446 residues long: MILGQPLAQWRAQYPLLDELIALRETSWFNPAVAPAAEALGDVGLSAADVADARARLERFAPYLARAFPQTAASGGIIESDILPLPQMQALLREEAEGEIGALWLKRDSHLPISGSIKARGGIYEVLKHAEDLALAAGLLGLDDDYACLDSDAMRAFFGGYQVAVGSTGNLGLSIGIISARLGFQATVHMSADARQWKKDKLRAHGVTVVEYASDYSVAVEQGRRQAEADPRCHFVDDENSRHLFLGYAVAGERLRQQLAAANVVVDAEHPLFVYLPCGVGGGPGGVAFGLKLAFGDAVHCLFAEPTHSPCMLLGVHTGRHEELAVQDFGIDNRTAADGLAVGRPSGFVGRAMQRLIDGYYTVSDEQLFRYLALVEQTEGQRLEPSALAGMPGVLRVLGERQGYRQRMGLTPQRMARATHLVWATGGSMVPEAEMDSYLARGRQLL.

K118 is modified (N6-(pyridoxal phosphate)lysine).

It belongs to the serine/threonine dehydratase family. DsdA subfamily. Requires pyridoxal 5'-phosphate as cofactor.

The catalysed reaction is D-serine = pyruvate + NH4(+). This is Probable D-serine dehydratase from Ectopseudomonas mendocina (strain ymp) (Pseudomonas mendocina).